The sequence spans 275 residues: NH(3)-dependent NAD(+) synthetase (275 aa).

Position 50-57 (50-57) interacts with ATP; sequence GISGGVDS. Residue Asp-56 participates in Mg(2+) binding. Position 147 (Arg-147) interacts with deamido-NAD(+). Position 167 (Thr-167) interacts with ATP. Glu-172 is a Mg(2+) binding site. Lys-180 and Asp-187 together coordinate deamido-NAD(+). Lys-196 and Thr-218 together coordinate ATP. Deamido-NAD(+) is bound at residue 267-268; it reads HK.

Belongs to the NAD synthetase family. In terms of assembly, homodimer.

It carries out the reaction deamido-NAD(+) + NH4(+) + ATP = AMP + diphosphate + NAD(+) + H(+). It functions in the pathway cofactor biosynthesis; NAD(+) biosynthesis; NAD(+) from deamido-NAD(+) (ammonia route): step 1/1. Catalyzes the ATP-dependent amidation of deamido-NAD to form NAD. Uses ammonia as a nitrogen source. This is NH(3)-dependent NAD(+) synthetase from Pseudomonas syringae pv. tomato (strain ATCC BAA-871 / DC3000).